Here is a 568-residue protein sequence, read N- to C-terminus: Urease subunit alpha (568 aa).

The 439-residue stretch at 130–568 folds into the Urease domain; that stretch reads GGIDTHIHFI…LPMAQRYFLF (439 aa). Positions 135, 137, and 218 each coordinate Ni(2+). An N6-carboxylysine modification is found at lysine 218. Substrate is bound at residue histidine 220. Ni(2+)-binding residues include histidine 247 and histidine 273. The active-site Proton donor is the histidine 321. Aspartate 361 provides a ligand contact to Ni(2+).

It belongs to the metallo-dependent hydrolases superfamily. Urease alpha subunit family. In terms of assembly, heterotrimer of UreA (gamma), UreB (beta) and UreC (alpha) subunits. Three heterotrimers associate to form the active enzyme. Ni cation serves as cofactor. Carboxylation allows a single lysine to coordinate two nickel ions.

It is found in the cytoplasm. The catalysed reaction is urea + 2 H2O + H(+) = hydrogencarbonate + 2 NH4(+). The protein operates within nitrogen metabolism; urea degradation; CO(2) and NH(3) from urea (urease route): step 1/1. This is Urease subunit alpha from Burkholderia ambifaria (strain ATCC BAA-244 / DSM 16087 / CCUG 44356 / LMG 19182 / AMMD) (Burkholderia cepacia (strain AMMD)).